We begin with the raw amino-acid sequence, 60 residues long: Large ribosomal subunit protein uL30 (60 aa).

It belongs to the universal ribosomal protein uL30 family. In terms of assembly, part of the 50S ribosomal subunit.

The sequence is that of Large ribosomal subunit protein uL30 from Kineococcus radiotolerans (strain ATCC BAA-149 / DSM 14245 / SRS30216).